The following is a 233-amino-acid chain: Ribose-5-phosphate isomerase A (233 aa).

Substrate contacts are provided by residues 31-34 (SGST), 87-90 (DGAD), and 100-103 (KGGG). The active-site Proton acceptor is the Glu109. Residue Lys127 coordinates substrate.

This sequence belongs to the ribose 5-phosphate isomerase family. In terms of assembly, homodimer.

The catalysed reaction is aldehydo-D-ribose 5-phosphate = D-ribulose 5-phosphate. The protein operates within carbohydrate degradation; pentose phosphate pathway; D-ribose 5-phosphate from D-ribulose 5-phosphate (non-oxidative stage): step 1/1. Catalyzes the reversible conversion of ribose-5-phosphate to ribulose 5-phosphate. The sequence is that of Ribose-5-phosphate isomerase A from Chlamydia felis (strain Fe/C-56) (Chlamydophila felis).